We begin with the raw amino-acid sequence, 172 residues long: Protein GrpE (172 aa).

Residues 1–24 (MNQDHPEFDSEDLAQNPPETDPLK) are disordered.

The protein belongs to the GrpE family. Homodimer.

Its subcellular location is the cytoplasm. Participates actively in the response to hyperosmotic and heat shock by preventing the aggregation of stress-denatured proteins, in association with DnaK and GrpE. It is the nucleotide exchange factor for DnaK and may function as a thermosensor. Unfolded proteins bind initially to DnaJ; upon interaction with the DnaJ-bound protein, DnaK hydrolyzes its bound ATP, resulting in the formation of a stable complex. GrpE releases ADP from DnaK; ATP binding to DnaK triggers the release of the substrate protein, thus completing the reaction cycle. Several rounds of ATP-dependent interactions between DnaJ, DnaK and GrpE are required for fully efficient folding. The sequence is that of Protein GrpE from Xanthomonas oryzae pv. oryzae (strain PXO99A).